The following is an 88-amino-acid chain: Meiosis expressed gene 1 protein homolog (88 aa).

This sequence belongs to the MEIG1 family. In terms of assembly, interacts with PACRG. Interacts with MORN3.

Functionally, essential for spermiogenesis. In Homo sapiens (Human), this protein is Meiosis expressed gene 1 protein homolog.